The chain runs to 303 residues: Pseudouridine-5'-phosphate glycosidase (303 aa).

Glu24 functions as the Proton donor in the catalytic mechanism. Residues Lys85 and Val105 each coordinate substrate. Asp137 lines the Mn(2+) pocket. A substrate-binding site is contributed by 139-141 (SAD). The active-site Nucleophile is the Lys158.

The protein belongs to the pseudouridine-5'-phosphate glycosidase family. In terms of assembly, homotrimer. Mn(2+) serves as cofactor.

It carries out the reaction D-ribose 5-phosphate + uracil = psi-UMP + H2O. Catalyzes the reversible cleavage of pseudouridine 5'-phosphate (PsiMP) to ribose 5-phosphate and uracil. Functions biologically in the cleavage direction, as part of a pseudouridine degradation pathway. In Herpetosiphon aurantiacus (strain ATCC 23779 / DSM 785 / 114-95), this protein is Pseudouridine-5'-phosphate glycosidase.